Consider the following 388-residue polypeptide: Succinate--CoA ligase [ADP-forming] subunit beta (388 aa).

The region spanning 9 to 244 (KEILRKFGVA…LDEEDPAEIE (236 aa)) is the ATP-grasp domain. Residues lysine 46, 53 to 55 (GRG), glutamate 99, alanine 102, and glutamate 107 contribute to the ATP site. Mg(2+) is bound by residues asparagine 199 and aspartate 213. Substrate contacts are provided by residues asparagine 264 and 321 to 323 (GIM).

Belongs to the succinate/malate CoA ligase beta subunit family. As to quaternary structure, heterotetramer of two alpha and two beta subunits. The cofactor is Mg(2+).

It carries out the reaction succinate + ATP + CoA = succinyl-CoA + ADP + phosphate. It catalyses the reaction GTP + succinate + CoA = succinyl-CoA + GDP + phosphate. It functions in the pathway carbohydrate metabolism; tricarboxylic acid cycle; succinate from succinyl-CoA (ligase route): step 1/1. Its function is as follows. Succinyl-CoA synthetase functions in the citric acid cycle (TCA), coupling the hydrolysis of succinyl-CoA to the synthesis of either ATP or GTP and thus represents the only step of substrate-level phosphorylation in the TCA. The beta subunit provides nucleotide specificity of the enzyme and binds the substrate succinate, while the binding sites for coenzyme A and phosphate are found in the alpha subunit. The protein is Succinate--CoA ligase [ADP-forming] subunit beta of Burkholderia ambifaria (strain MC40-6).